Here is a 96-residue protein sequence, read N- to C-terminus: Sec-independent protein translocase protein TatA (96 aa).

The chain crosses the membrane as a helical span at residues M1 to G21. A disordered region spans residues G42–G96. A compositionally biased stretch (basic and acidic residues) spans A56–K65. The span at P73–P86 shows a compositional bias: pro residues.

It belongs to the TatA/E family. The Tat system comprises two distinct complexes: a TatABC complex, containing multiple copies of TatA, TatB and TatC subunits, and a separate TatA complex, containing only TatA subunits. Substrates initially bind to the TatABC complex, which probably triggers association of the separate TatA complex to form the active translocon.

The protein resides in the cell inner membrane. In terms of biological role, part of the twin-arginine translocation (Tat) system that transports large folded proteins containing a characteristic twin-arginine motif in their signal peptide across membranes. TatA could form the protein-conducting channel of the Tat system. The sequence is that of Sec-independent protein translocase protein TatA from Rhodospirillum rubrum (strain ATCC 11170 / ATH 1.1.1 / DSM 467 / LMG 4362 / NCIMB 8255 / S1).